An 83-amino-acid chain; its full sequence is Putative defensin-like protein 131 (83 aa).

The signal sequence occupies residues 1 to 34; sequence MAKNRVLTIFYCTIYYCICFKYVLLGMVVEKTQG. 4 cysteine pairs are disulfide-bonded: C37-C83, C46-C65, C51-C77, and C55-C79.

This sequence belongs to the DEFL family.

Its subcellular location is the secreted. The polypeptide is Putative defensin-like protein 131 (LCR29) (Arabidopsis thaliana (Mouse-ear cress)).